Reading from the N-terminus, the 1076-residue chain is DNA-directed RNA polymerase subunit beta (1076 aa).

The protein belongs to the RNA polymerase beta chain family. As to quaternary structure, in plastids the minimal PEP RNA polymerase catalytic core is composed of four subunits: alpha, beta, beta', and beta''. When a (nuclear-encoded) sigma factor is associated with the core the holoenzyme is formed, which can initiate transcription.

Its subcellular location is the plastid. The protein localises to the chloroplast. The catalysed reaction is RNA(n) + a ribonucleoside 5'-triphosphate = RNA(n+1) + diphosphate. Its function is as follows. DNA-dependent RNA polymerase catalyzes the transcription of DNA into RNA using the four ribonucleoside triphosphates as substrates. The polypeptide is DNA-directed RNA polymerase subunit beta (Hordeum vulgare (Barley)).